The following is a 214-amino-acid chain: Phosphoheptose isomerase (214 aa).

The SIS domain occupies 51-209; the sequence is IASTFEDGGK…IDLVERLLGY (159 aa). 66-68 provides a ligand contact to substrate; sequence NGG. Zn(2+) contacts are provided by His-75 and Glu-79. Substrate is bound by residues Glu-79, 110–111, 136–138, Ser-141, and Gln-189; these read ND and STS. Zn(2+)-binding residues include Gln-189 and His-197.

Belongs to the SIS family. GmhA subfamily. Zn(2+) is required as a cofactor.

It is found in the cytoplasm. It catalyses the reaction 2 D-sedoheptulose 7-phosphate = D-glycero-alpha-D-manno-heptose 7-phosphate + D-glycero-beta-D-manno-heptose 7-phosphate. It participates in carbohydrate biosynthesis; D-glycero-D-manno-heptose 7-phosphate biosynthesis; D-glycero-alpha-D-manno-heptose 7-phosphate and D-glycero-beta-D-manno-heptose 7-phosphate from sedoheptulose 7-phosphate: step 1/1. Functionally, catalyzes the isomerization of sedoheptulose 7-phosphate in D-glycero-D-manno-heptose 7-phosphate. This is Phosphoheptose isomerase from Chlorobium limicola (strain DSM 245 / NBRC 103803 / 6330).